A 512-amino-acid chain; its full sequence is ATP synthase subunit alpha (512 aa).

169 to 176 (GDRQTGKT) lines the ATP pocket.

Belongs to the ATPase alpha/beta chains family. As to quaternary structure, F-type ATPases have 2 components, CF(1) - the catalytic core - and CF(0) - the membrane proton channel. CF(1) has five subunits: alpha(3), beta(3), gamma(1), delta(1), epsilon(1). CF(0) has four main subunits: a(1), b(1), b'(1) and c(9-12).

Its subcellular location is the cell inner membrane. It carries out the reaction ATP + H2O + 4 H(+)(in) = ADP + phosphate + 5 H(+)(out). Produces ATP from ADP in the presence of a proton gradient across the membrane. The alpha chain is a regulatory subunit. The chain is ATP synthase subunit alpha from Roseobacter denitrificans (strain ATCC 33942 / OCh 114) (Erythrobacter sp. (strain OCh 114)).